A 466-amino-acid chain; its full sequence is Keratin, type II cytoskeletal 7 (466 aa).

Ser2 bears the N-acetylserine mark. Phosphoserine is present on residues Ser2 and Ser7. The tract at residues 2–91 is head; the sequence is SLHFGSQVFS…DPSIQQVRQE (90 aa). Ser12 carries an O-linked (GlcNAc) serine glycan. Arg20 is subject to Dimethylated arginine; alternate. Omega-N-methylarginine; alternate is present on Arg20. A phosphoserine mark is found at Ser54, Ser72, and Ser84. Positions 91–127 are coil 1A; the sequence is EEREQIKTLNNKFASFIDKVRFLEQQNKLLETKWALL. An IF rod domain is found at 92 to 404; sequence EREQIKTLNN…KLLEGEESRL (313 aa). A Phosphothreonine modification is found at Thr98. The linker 1 stretch occupies residues 128–145; sequence QEQKSAKSNRLPGIFEAQ. Lys131 is covalently cross-linked (Glycyl lysine isopeptide (Lys-Gly) (interchain with G-Cter in SUMO2)). The coil 1B stretch occupies residues 146-237; it reads IAGLRKQLEA…TLYEQELKEL (92 aa). Lys180 bears the N6-acetyllysine mark. Residues 238–261 are linker 12; that stretch reads QSEVSDTSVVLSMDNNRSLDLDSI. Ser255 carries the phosphoserine modification. The interval 262-400 is coil 2; sequence IAEVKAQYEE…ATYRKLLEGE (139 aa). Glycyl lysine isopeptide (Lys-Gly) (interchain with G-Cter in SUMO2) cross-links involve residues Lys266 and Lys287. Thr290 carries the post-translational modification Phosphothreonine. Residues Lys297 and Lys332 each participate in a glycyl lysine isopeptide (Lys-Gly) (interchain with G-Cter in SUMO2) cross-link. The interval 401-466 is tail; that stretch reads ESRLTGDGVG…TSATSRSPRK (66 aa).

This sequence belongs to the intermediate filament family. Heterotetramer of two type I and two type II keratins. Interacts with eukaryotic translation initiator factor 3 (eIF3) subunit EIF3S10. Interacts with GPER1. Post-translationally, arg-20 is dimethylated, probably to asymmetric dimethylarginine.

Functionally, blocks interferon-dependent interphase and stimulates DNA synthesis in cells. This is Keratin, type II cytoskeletal 7 from Bos taurus (Bovine).